A 530-amino-acid polypeptide reads, in one-letter code: MSKRILYKDQARKALERGIDVLAKAVSITLGPKGRNVVIDKKYGAPQIINDGIAIAKEIELKNHMENTGVSLIRQAAAKTNDVAGDGTTTATVLAHAIIKQGLKYVSTGSNPISLKKGIEKASQFIIQKISENSRPIEDVKSIIQVSSISAGNDEEIGSMIANAIQKVGKDGVISLEEGKSAITELEITQGMKFEKGYISPYFITNSEKMEVVLENPYILMTDKKITLVKEDLLPVLTLINKTNRPLLIIAEDVEKEALATLVINKLRGIVNVVAVRAPGFGDRKKALLEDIAILTNGQVISEETGLNLETITLDVLGQARRATILRDSTTIVEDKNQQAVHARCEQLKNQLLIAKSSYEKEKLQERLAKLIGGVAVIKVGAATETEMKEKKLRLEDSINATKAAIEEGIVPGGGTALVHISANLKQWAKINLSSDELLGANIVEQASLAPLHKIAENSGKNGSLIVEALEHKNFEIGYDALSNSLVDMYDAGIIDPAKVTRSAIQNAASIASMVLTTECVIVNRDKKNN.

ATP contacts are provided by residues 29–32 (TLGP), 86–90 (DGTTT), G414, 480–482 (DAL), and D496.

This sequence belongs to the chaperonin (HSP60) family. In terms of assembly, forms a cylinder of 14 subunits composed of two heptameric rings stacked back-to-back. Interacts with the co-chaperonin GroES.

It is found in the plastid. The protein resides in the chloroplast. The enzyme catalyses ATP + H2O + a folded polypeptide = ADP + phosphate + an unfolded polypeptide.. In terms of biological role, together with its co-chaperonin GroES, plays an essential role in assisting protein folding. The GroEL-GroES system forms a nano-cage that allows encapsulation of the non-native substrate proteins and provides a physical environment optimized to promote and accelerate protein folding. The sequence is that of Chaperonin GroEL, chloroplastic from Cyanidium caldarium (Red alga).